Reading from the N-terminus, the 660-residue chain is Peroxisomal acyl-coenzyme A oxidase 1 (660 aa).

Position 26 is a phosphoserine (serine 26). Lysine 89 and lysine 90 each carry N6-succinyllysine. FAD is bound by residues threonine 139 and glycine 178. Position 216 is an N6-acetyllysine (lysine 216). At lysine 241 the chain carries N6-succinyllysine. N6-acetyllysine occurs at positions 255, 267, and 272. Lysine 349 is subject to N6-succinyllysine. The active-site Proton acceptor is glutamate 421. An N6-acetyllysine; alternate mark is found at lysine 437 and lysine 446. N6-succinyllysine; alternate is present on residues lysine 437 and lysine 446. Lysine 500 is subject to N6-acetyllysine. An N6-acetyllysine; alternate modification is found at lysine 512. Position 512 is an N6-succinyllysine; alternate (lysine 512). Lysine 542 is subject to N6-succinyllysine. The residue at position 637 (lysine 637) is an N6-acetyllysine; alternate. Lysine 637 carries the N6-succinyllysine; alternate modification. An N6-succinyllysine modification is found at lysine 643. At serine 649 the chain carries Phosphoserine. Lysine 651 carries the N6-acetyllysine modification. Residue lysine 654 is modified to N6-succinyllysine. A Microbody targeting signal motif is present at residues serine 658 to leucine 660.

It belongs to the acyl-CoA oxidase family. Homodimer. Interacts with LONP2. The cofactor is FAD.

The protein resides in the peroxisome. The catalysed reaction is a 2,3-saturated acyl-CoA + O2 = a (2E)-enoyl-CoA + H2O2. It carries out the reaction hexadecanoyl-CoA + O2 = (2E)-hexadecenoyl-CoA + H2O2. It catalyses the reaction dodecanoyl-CoA + O2 = (2E)-dodecenoyl-CoA + H2O2. The enzyme catalyses octanoyl-CoA + O2 = (2E)-octenoyl-CoA + H2O2. The catalysed reaction is decanoyl-CoA + O2 = (2E)-decenoyl-CoA + H2O2. It carries out the reaction tetradecanoyl-CoA + O2 = (2E)-tetradecenoyl-CoA + H2O2. It catalyses the reaction hexadecanedioyl-CoA + O2 = (2E)-hexadecenedioyl-CoA + H2O2. The enzyme catalyses tetracosanoyl-CoA + O2 = (2E)-tetracosenoyl-CoA + H2O2. The catalysed reaction is glutaryl-CoA + O2 = (2E)-glutaconyl-CoA + H2O2. It carries out the reaction hexanoyl-CoA + O2 = (2E)-hexenoyl-CoA + H2O2. It catalyses the reaction octadecanoyl-CoA + O2 = (2E)-octadecenoyl-CoA + H2O2. The enzyme catalyses (5Z,8Z,11Z,14Z,17Z)-eicosapentaenoyl-CoA + O2 = (2E,5Z,8Z,11Z,14Z,17Z)-icosahexaenoyl-CoA + H2O2. The catalysed reaction is (6Z,9Z,12Z,15Z,18Z,21Z)-tetracosahexaenoyl-CoA + O2 = (2E,6Z,9Z,12Z,15Z,18Z,21Z)-tetracosaheptaenoyl-CoA + H2O2. Its pathway is lipid metabolism; peroxisomal fatty acid beta-oxidation. Its function is as follows. Involved in the initial and rate-limiting step of peroxisomal beta-oxidation of straight-chain saturated and unsaturated very-long-chain fatty acids. Catalyzes the desaturation of fatty acyl-CoAs such as palmitoyl-CoA (hexadecanoyl-CoA) to 2-trans-enoyl-CoAs ((2E)-enoyl-CoAs) such as (2E)-hexadecenoyl-CoA, and donates electrons directly to molecular oxygen (O(2)), thereby producing hydrogen peroxide (H(2)O(2)). Shows highest activity against medium-chain fatty acyl-CoAs. Shows optimum activity with a chain length of 10 carbons (decanoyl-CoA) in vitro. Functionally, is active against a much broader range of substrates and shows activity towards long-chain acyl-CoAs. The sequence is that of Peroxisomal acyl-coenzyme A oxidase 1 from Pongo abelii (Sumatran orangutan).